A 201-amino-acid polypeptide reads, in one-letter code: uncharacterized protein (201 aa).

4 helical membrane passes run 9-29 (YNVFLANLVLVFGFALNILVA), 42-62 (FLFVTPFLGVVIGAVLYFFDV), 86-106 (SGVIVFFLNVLIGVVLLVVMV), and 126-146 (LPYLWSTTGTSIVLSLISIGM). Composition is skewed to basic and acidic residues over residues 165-174 (EPTDPNKTDN) and 182-191 (DENKKNEKEQ). The interval 165–201 (EPTDPNKTDNRAVVINLDENKKNEKEQSPPSAEMTSL) is disordered. Residues 192-201 (SPPSAEMTSL) are compositionally biased toward polar residues.

It localises to the cell membrane. This is an uncharacterized protein from Mycoplasma genitalium (strain ATCC 33530 / DSM 19775 / NCTC 10195 / G37) (Mycoplasmoides genitalium).